The following is a 312-amino-acid chain: Methionyl-tRNA formyltransferase (312 aa).

109–112 (SLLP) is a (6S)-5,6,7,8-tetrahydrofolate binding site.

Belongs to the Fmt family.

The catalysed reaction is L-methionyl-tRNA(fMet) + (6R)-10-formyltetrahydrofolate = N-formyl-L-methionyl-tRNA(fMet) + (6S)-5,6,7,8-tetrahydrofolate + H(+). Attaches a formyl group to the free amino group of methionyl-tRNA(fMet). The formyl group appears to play a dual role in the initiator identity of N-formylmethionyl-tRNA by promoting its recognition by IF2 and preventing the misappropriation of this tRNA by the elongation apparatus. This Caulobacter sp. (strain K31) protein is Methionyl-tRNA formyltransferase.